The following is a 275-amino-acid chain: MTTTNLSAVADPLRLYDETFASRLLLGTARYPSPQSLEDAVRVSNPAMLTVALRRQSAGSPEGGAGFWKMLRELGVPVLPNTAGCYSADEAYTLAQMSRELFETDWIKLEVIGDDYTLQPDTLALPAAAERLIRDGFKVLPYCTEDLVLCRRLLDVGCQALMPWAAPIGTGRGPTNPYGLRLLRERLPNVPLIVDAGLGVPSHATQVMEWGYDAVLLNTAVAQAGDPVAMAQAFAMATQAGRLARLSGPMPERDVAQASTPVVGLPFWHAEEKQA.

Lys-108 (schiff-base intermediate with DXP) is an active-site residue. Residues Gly-169, 196–197, and 218–219 each bind 1-deoxy-D-xylulose 5-phosphate; these read AG and NT.

It belongs to the ThiG family. As to quaternary structure, homotetramer. Forms heterodimers with either ThiH or ThiS.

The protein localises to the cytoplasm. The enzyme catalyses [ThiS sulfur-carrier protein]-C-terminal-Gly-aminoethanethioate + 2-iminoacetate + 1-deoxy-D-xylulose 5-phosphate = [ThiS sulfur-carrier protein]-C-terminal Gly-Gly + 2-[(2R,5Z)-2-carboxy-4-methylthiazol-5(2H)-ylidene]ethyl phosphate + 2 H2O + H(+). Its pathway is cofactor biosynthesis; thiamine diphosphate biosynthesis. Functionally, catalyzes the rearrangement of 1-deoxy-D-xylulose 5-phosphate (DXP) to produce the thiazole phosphate moiety of thiamine. Sulfur is provided by the thiocarboxylate moiety of the carrier protein ThiS. In vitro, sulfur can be provided by H(2)S. In Ralstonia pickettii (strain 12J), this protein is Thiazole synthase.